Consider the following 118-residue polypeptide: V-type proton ATPase subunit G 1 (118 aa).

Ala2 carries the post-translational modification N-acetylalanine. The segment at 55–90 (FQSKQQAAMGSQGNLSAEVEQATRRQVQGMQSSQQR) is disordered. Composition is skewed to polar residues over residues 56–69 (QSKQQAAMGSQGNL) and 78–89 (RRQVQGMQSSQQ).

This sequence belongs to the V-ATPase G subunit family. V-ATPase is a heteromultimeric enzyme made up of two complexes: the ATP-hydrolytic V1 complex and the proton translocation V0 complex. The V1 complex consists of three catalytic AB heterodimers that form a heterohexamer, three peripheral stalks each consisting of EG heterodimers, one central rotor including subunits D and F, and the regulatory subunits C and H. The proton translocation complex V0 consists of the proton transport subunit a, a ring of proteolipid subunits c9c'', rotary subunit d, subunits e and f, and the accessory subunits ATP6AP1/Ac45 and ATP6AP2/PRR.

Its subcellular location is the apical cell membrane. Subunit of the V1 complex of vacuolar(H+)-ATPase (V-ATPase), a multisubunit enzyme composed of a peripheral complex (V1) that hydrolyzes ATP and a membrane integral complex (V0) that translocates protons. V-ATPase is responsible for acidifying and maintaining the pH of intracellular compartments and in some cell types, is targeted to the plasma membrane, where it is responsible for acidifying the extracellular environment. In aerobic conditions, involved in intracellular iron homeostasis, thus triggering the activity of Fe(2+) prolyl hydroxylase (PHD) enzymes, and leading to HIF1A hydroxylation and subsequent proteasomal degradation. This is V-type proton ATPase subunit G 1 (ATP6V1G1) from Canis lupus familiaris (Dog).